Reading from the N-terminus, the 284-residue chain is Phosphatidylglycerol--prolipoprotein diacylglyceryl transferase (284 aa).

7 consecutive transmembrane segments (helical) span residues 18–38, 62–82, 106–126, 136–156, 190–210, 218–238, and 252–272; these read LGGI…VIAF, YFLW…VLIY, FVGI…IASY, LLIY…FGRI, PSQL…VLWA, GLLI…AEFY, and LSMG…ILLY. Residue Arg155 coordinates a 1,2-diacyl-sn-glycero-3-phospho-(1'-sn-glycerol).

It belongs to the Lgt family.

It localises to the cell inner membrane. The enzyme catalyses L-cysteinyl-[prolipoprotein] + a 1,2-diacyl-sn-glycero-3-phospho-(1'-sn-glycerol) = an S-1,2-diacyl-sn-glyceryl-L-cysteinyl-[prolipoprotein] + sn-glycerol 1-phosphate + H(+). It functions in the pathway protein modification; lipoprotein biosynthesis (diacylglyceryl transfer). Functionally, catalyzes the transfer of the diacylglyceryl group from phosphatidylglycerol to the sulfhydryl group of the N-terminal cysteine of a prolipoprotein, the first step in the formation of mature lipoproteins. The protein is Phosphatidylglycerol--prolipoprotein diacylglyceryl transferase of Helicobacter pylori (strain G27).